Reading from the N-terminus, the 292-residue chain is Ribosomal protein L11 methyltransferase (292 aa).

S-adenosyl-L-methionine is bound by residues Thr-136, Gly-159, Asp-181, and Asn-228.

This sequence belongs to the methyltransferase superfamily. PrmA family.

It localises to the cytoplasm. The enzyme catalyses L-lysyl-[protein] + 3 S-adenosyl-L-methionine = N(6),N(6),N(6)-trimethyl-L-lysyl-[protein] + 3 S-adenosyl-L-homocysteine + 3 H(+). In terms of biological role, methylates ribosomal protein L11. This is Ribosomal protein L11 methyltransferase from Rhizobium leguminosarum bv. trifolii (strain WSM2304).